Consider the following 157-residue polypeptide: Probable intracellular pathogenesis-related protein T1 (157 aa).

Asn-79 and Asn-117 each carry an N-linked (GlcNAc...) asparagine glycan.

It belongs to the BetVI family.

The chain is Probable intracellular pathogenesis-related protein T1 (PCKR3) from Catharanthus roseus (Madagascar periwinkle).